Consider the following 232-residue polypeptide: LexA repressor (232 aa).

The disordered stretch occupies residues 1–25 (MSDDSSDSTSGAGSGRGRDSGLTER). Residues 16 to 25 (RGRDSGLTER) show a composition bias toward basic and acidic residues. The H-T-H motif DNA-binding region spans 46 to 66 (IREIGDAVGLTSTSSVAHQLR). Residues Ser156 and Lys193 each act as for autocatalytic cleavage activity in the active site.

This sequence belongs to the peptidase S24 family. In terms of assembly, homodimer.

The catalysed reaction is Hydrolysis of Ala-|-Gly bond in repressor LexA.. Functionally, represses a number of genes involved in the response to DNA damage (SOS response), including recA and lexA. In the presence of single-stranded DNA, RecA interacts with LexA causing an autocatalytic cleavage which disrupts the DNA-binding part of LexA, leading to derepression of the SOS regulon and eventually DNA repair. This chain is LexA repressor, found in Mycolicibacterium vanbaalenii (strain DSM 7251 / JCM 13017 / BCRC 16820 / KCTC 9966 / NRRL B-24157 / PYR-1) (Mycobacterium vanbaalenii).